The sequence spans 84 residues: CDC42 small effector protein 2 (84 aa).

2 S-palmitoyl cysteine lipidation sites follow: Cys10 and Cys11. Residues 29–42 (IGEPTNFVHTAHVG) enclose the CRIB domain. A phosphoserine mark is found at Ser43 and Ser52.

It belongs to the CDC42SE/SPEC family. As to quaternary structure, interacts with CDC42 (in GTP-bound form). Interacts weakly with RAC1 and not at all with RHOA. As to expression, widely expressed. Expressed at higher level in T-lymphocytes. Highly expressed in CCRF-CEM T-lymphocytes, Jurkat T-lymphocytes, and Raji B-lymphocytes compared (at protein level).

Its subcellular location is the cytoplasm. It is found in the cytoskeleton. It localises to the cell membrane. The protein resides in the cell projection. The protein localises to the phagocytic cup. Probably involved in the organization of the actin cytoskeleton by acting downstream of CDC42, inducing actin filament assembly. Alters CDC42-induced cell shape changes. In activated T-cells, may play a role in CDC42-mediated F-actin accumulation at the immunological synapse. May play a role in early contractile events in phagocytosis in macrophages. This chain is CDC42 small effector protein 2 (CDC42SE2), found in Homo sapiens (Human).